Consider the following 626-residue polypeptide: Chaperone protein HtpG (626 aa).

The interval 1 to 341 is a; substrate-binding; the sequence is MRKKKFKAES…SEDLSLNISR (341 aa). A b region spans residues 342-552; the sequence is EMLQHDRQLK…DGEVTIEMEK (211 aa). Residues 553–626 are c; the sequence is VLNAMPDSQQ…FTNDICKVMV (74 aa).

The protein belongs to the heat shock protein 90 family. Homodimer.

Its subcellular location is the cytoplasm. Its function is as follows. Molecular chaperone. Has ATPase activity. The polypeptide is Chaperone protein HtpG (Bacillus velezensis (strain DSM 23117 / BGSC 10A6 / LMG 26770 / FZB42) (Bacillus amyloliquefaciens subsp. plantarum)).